The chain runs to 329 residues: Beta-ketoacyl-[acyl-carrier-protein] synthase III (329 aa).

Residues Cys123 and His256 contribute to the active site. Residues Gln257–Arg261 are ACP-binding. Residue Asn286 is part of the active site.

It belongs to the thiolase-like superfamily. FabH family. As to quaternary structure, homodimer.

Its subcellular location is the cytoplasm. It catalyses the reaction malonyl-[ACP] + acetyl-CoA + H(+) = 3-oxobutanoyl-[ACP] + CO2 + CoA. Its pathway is lipid metabolism; fatty acid biosynthesis. Catalyzes the condensation reaction of fatty acid synthesis by the addition to an acyl acceptor of two carbons from malonyl-ACP. Catalyzes the first condensation reaction which initiates fatty acid synthesis and may therefore play a role in governing the total rate of fatty acid production. Possesses both acetoacetyl-ACP synthase and acetyl transacylase activities. Its substrate specificity determines the biosynthesis of branched-chain and/or straight-chain of fatty acids. This chain is Beta-ketoacyl-[acyl-carrier-protein] synthase III, found in Burkholderia mallei (strain NCTC 10247).